A 91-amino-acid chain; its full sequence is Metalloproteinase inhibitor 2 (91 aa).

The region spanning 1-91 (KAVSEKEVDS…FIVPWDTLST (91 aa)) is the NTR domain.

Belongs to the protease inhibitor I35 (TIMP) family. In terms of processing, the activity of TIMP2 is dependent on the presence of disulfide bonds.

The protein localises to the secreted. Complexes with metalloproteinases (such as collagenases) and irreversibly inactivates them. In Equus caballus (Horse), this protein is Metalloproteinase inhibitor 2 (TIMP2).